Consider the following 190-residue polypeptide: Probable chorismate pyruvate-lyase (190 aa).

Residues R77, L115, and E174 each coordinate substrate.

The protein belongs to the UbiC family.

The protein localises to the cytoplasm. It carries out the reaction chorismate = 4-hydroxybenzoate + pyruvate. The protein operates within cofactor biosynthesis; ubiquinone biosynthesis. Functionally, removes the pyruvyl group from chorismate, with concomitant aromatization of the ring, to provide 4-hydroxybenzoate (4HB) for the ubiquinone pathway. The sequence is that of Probable chorismate pyruvate-lyase from Shewanella sp. (strain MR-4).